The sequence spans 399 residues: S-adenosylmethionine synthase (399 aa).

Residue H17 coordinates ATP. D19 is a Mg(2+) binding site. A K(+)-binding site is contributed by E45. Residues E58 and Q101 each coordinate L-methionine. The segment at 101 to 111 (QSADIAMGVDQ) is flexible loop. Residues 177 to 179 (DGK), 244 to 245 (RF), D253, 259 to 260 (RK), A276, and K280 contribute to the ATP site. D253 contacts L-methionine. K284 contacts L-methionine.

This sequence belongs to the AdoMet synthase family. As to quaternary structure, homotetramer; dimer of dimers. The cofactor is Mg(2+). It depends on K(+) as a cofactor.

The protein localises to the cytoplasm. It carries out the reaction L-methionine + ATP + H2O = S-adenosyl-L-methionine + phosphate + diphosphate. It participates in amino-acid biosynthesis; S-adenosyl-L-methionine biosynthesis; S-adenosyl-L-methionine from L-methionine: step 1/1. Functionally, catalyzes the formation of S-adenosylmethionine (AdoMet) from methionine and ATP. The overall synthetic reaction is composed of two sequential steps, AdoMet formation and the subsequent tripolyphosphate hydrolysis which occurs prior to release of AdoMet from the enzyme. The chain is S-adenosylmethionine synthase from Bacillus cereus (strain G9842).